A 197-amino-acid chain; its full sequence is dITP/XTP pyrophosphatase (197 aa).

Residue 8–13 (TGNPGK) coordinates substrate. Residues Glu-40 and Asp-69 each contribute to the Mg(2+) site. The active-site Proton acceptor is Asp-69. Substrate contacts are provided by residues Ser-70, 154–157 (FGYD), Lys-177, and 182–183 (HR).

The protein belongs to the HAM1 NTPase family. In terms of assembly, homodimer. Requires Mg(2+) as cofactor.

The enzyme catalyses XTP + H2O = XMP + diphosphate + H(+). The catalysed reaction is dITP + H2O = dIMP + diphosphate + H(+). It catalyses the reaction ITP + H2O = IMP + diphosphate + H(+). Functionally, pyrophosphatase that catalyzes the hydrolysis of nucleoside triphosphates to their monophosphate derivatives, with a high preference for the non-canonical purine nucleotides XTP (xanthosine triphosphate), dITP (deoxyinosine triphosphate) and ITP. Seems to function as a house-cleaning enzyme that removes non-canonical purine nucleotides from the nucleotide pool, thus preventing their incorporation into DNA/RNA and avoiding chromosomal lesions. The chain is dITP/XTP pyrophosphatase from Yersinia pestis.